The chain runs to 102 residues: Small ribosomal subunit protein uS10 (102 aa).

It belongs to the universal ribosomal protein uS10 family. Part of the 30S ribosomal subunit.

Its function is as follows. Involved in the binding of tRNA to the ribosomes. The chain is Small ribosomal subunit protein uS10 from Pediococcus pentosaceus (strain ATCC 25745 / CCUG 21536 / LMG 10740 / 183-1w).